The following is a 189-amino-acid chain: Phosphoheptose isomerase (189 aa).

An SIS domain is found at leucine 34–glycine 189. Asparagine 49 to glycine 51 contacts substrate. Positions 58 and 62 each coordinate Zn(2+). Substrate is bound by residues glutamate 62, asparagine 91–aspartate 92, serine 117–serine 119, serine 122, and glutamine 169. Positions 169 and 177 each coordinate Zn(2+).

This sequence belongs to the SIS family. GmhA subfamily. As to quaternary structure, homotetramer. The cofactor is Zn(2+).

The protein resides in the cytoplasm. It carries out the reaction 2 D-sedoheptulose 7-phosphate = D-glycero-alpha-D-manno-heptose 7-phosphate + D-glycero-beta-D-manno-heptose 7-phosphate. It participates in carbohydrate biosynthesis; D-glycero-D-manno-heptose 7-phosphate biosynthesis; D-glycero-alpha-D-manno-heptose 7-phosphate and D-glycero-beta-D-manno-heptose 7-phosphate from sedoheptulose 7-phosphate: step 1/1. Catalyzes the isomerization of sedoheptulose 7-phosphate in D-glycero-D-manno-heptose 7-phosphate. The protein is Phosphoheptose isomerase of Geotalea uraniireducens (strain Rf4) (Geobacter uraniireducens).